The chain runs to 504 residues: O-fucosyltransferase 39 (504 aa).

Residues 11–27 (WILSMFFFVVLFCNNVS) form a helical; Signal-anchor for type II membrane protein membrane-spanning segment. Asn-115 carries an N-linked (GlcNAc...) asparagine glycan. Residue 288–290 (HLR) participates in substrate binding. Residues Asn-359 and Asn-460 are each glycosylated (N-linked (GlcNAc...) asparagine).

The protein belongs to the glycosyltransferase GT106 family.

It is found in the membrane. It functions in the pathway glycan metabolism. The polypeptide is O-fucosyltransferase 39 (Arabidopsis thaliana (Mouse-ear cress)).